The sequence spans 438 residues: Adenylosuccinate synthetase (438 aa).

Residues 13-19 (GDEGKGK) and 41-43 (GHT) each bind GTP. The active-site Proton acceptor is the Asp14. Residues Asp14 and Gly41 each contribute to the Mg(2+) site. IMP is bound by residues 14 to 17 (DEGK), 39 to 42 (NAGH), Thr130, Arg144, Gln225, Thr240, and Arg312. His42 functions as the Proton donor in the catalytic mechanism. 308 to 314 (ATTGRQR) provides a ligand contact to substrate. Residues Arg314, 340 to 342 (KLD), and 422 to 424 (STG) each bind GTP.

The protein belongs to the adenylosuccinate synthetase family. As to quaternary structure, homodimer. It depends on Mg(2+) as a cofactor.

Its subcellular location is the cytoplasm. The enzyme catalyses IMP + L-aspartate + GTP = N(6)-(1,2-dicarboxyethyl)-AMP + GDP + phosphate + 2 H(+). It functions in the pathway purine metabolism; AMP biosynthesis via de novo pathway; AMP from IMP: step 1/2. In terms of biological role, plays an important role in the de novo pathway of purine nucleotide biosynthesis. Catalyzes the first committed step in the biosynthesis of AMP from IMP. The sequence is that of Adenylosuccinate synthetase from Ruthia magnifica subsp. Calyptogena magnifica.